Here is a 60-residue protein sequence, read N- to C-terminus: Mannitol-specific phosphotransferase enzyme IIA component (60 aa).

The 59-residue stretch at 2–60 folds into the PTS EIIA type-2 domain; the sequence is SELFSNDNIFLNVNVNSQNEAIEKAGKALVDSGAVTDAYIQVVSTFMGNGLAIPHGTDD. Catalysis depends on His56, which acts as the Tele-phosphohistidine intermediate. The residue at position 56 (His56) is a Phosphohistidine; by HPr.

As to quaternary structure, homodimer or homotrimer. Seems to be a monomer when not phosphorylated.

It is found in the cytoplasm. Functionally, the phosphoenolpyruvate-dependent sugar phosphotransferase system (sugar PTS), a major carbohydrate active transport system, catalyzes the phosphorylation of incoming sugar substrates concomitantly with their translocation across the cell membrane. The enzyme II CmtAB PTS system is involved in D-mannitol transport. The protein is Mannitol-specific phosphotransferase enzyme IIA component of Staphylococcus aureus.